The sequence spans 211 residues: FMN-dependent NADH:quinone oxidoreductase 2 (211 aa).

Position 102 to 105 (Met102 to Phe105) interacts with FMN.

Belongs to the azoreductase type 1 family. In terms of assembly, homodimer. FMN is required as a cofactor.

The enzyme catalyses 2 a quinone + NADH + H(+) = 2 a 1,4-benzosemiquinone + NAD(+). It carries out the reaction N,N-dimethyl-1,4-phenylenediamine + anthranilate + 2 NAD(+) = 2-(4-dimethylaminophenyl)diazenylbenzoate + 2 NADH + 2 H(+). Functionally, quinone reductase that provides resistance to thiol-specific stress caused by electrophilic quinones. Also exhibits azoreductase activity. Catalyzes the reductive cleavage of the azo bond in aromatic azo compounds to the corresponding amines. The polypeptide is FMN-dependent NADH:quinone oxidoreductase 2 (Bacillus thuringiensis subsp. konkukian (strain 97-27)).